A 602-amino-acid polypeptide reads, in one-letter code: Elongation factor 4 (602 aa).

In terms of domain architecture, tr-type G spans Lys-2–Lys-184. Residues Asp-14 to Thr-19 and Asn-131 to Asp-134 contribute to the GTP site.

It belongs to the TRAFAC class translation factor GTPase superfamily. Classic translation factor GTPase family. LepA subfamily.

The protein resides in the cell membrane. It catalyses the reaction GTP + H2O = GDP + phosphate + H(+). Its function is as follows. Required for accurate and efficient protein synthesis under certain stress conditions. May act as a fidelity factor of the translation reaction, by catalyzing a one-codon backward translocation of tRNAs on improperly translocated ribosomes. Back-translocation proceeds from a post-translocation (POST) complex to a pre-translocation (PRE) complex, thus giving elongation factor G a second chance to translocate the tRNAs correctly. Binds to ribosomes in a GTP-dependent manner. This is Elongation factor 4 from Baumannia cicadellinicola subsp. Homalodisca coagulata.